The primary structure comprises 188 residues: Auxin-induced protein 22C (188 aa).

Residues 13–17 carry the EAR-like (transcriptional repression) motif; that stretch reads LRLGL. The interval 16–57 is disordered; it reads GLPGAGGENNTDKDKNKNKKRVFSDIEGENSSSEEDGKKETK. A PB1 domain is found at 79-167; it reads KLYVKVSMDG…KRLRIMKRSD (89 aa).

It belongs to the Aux/IAA family. As to quaternary structure, homodimers and heterodimers.

The protein localises to the nucleus. Aux/IAA proteins are short-lived transcriptional factors that function as repressors of early auxin response genes at low auxin concentrations. Repression is thought to result from the interaction with auxin response factors (ARFs), proteins that bind to the auxin-responsive promoter element (AuxRE). Formation of heterodimers with ARF proteins may alter their ability to modulate early auxin response genes expression. This chain is Auxin-induced protein 22C (AUX22C), found in Vigna radiata var. radiata (Mung bean).